The sequence spans 131 residues: Large ribosomal subunit protein bL17 (131 aa).

It belongs to the bacterial ribosomal protein bL17 family. Part of the 50S ribosomal subunit. Contacts protein L32.

The sequence is that of Large ribosomal subunit protein bL17 from Cupriavidus pinatubonensis (strain JMP 134 / LMG 1197) (Cupriavidus necator (strain JMP 134)).